Consider the following 135-residue polypeptide: uncharacterized protein (135 aa).

One can recognise a Response regulatory domain in the interval 13–129; the sequence is QVLIAENSRF…KILEKVNAAI (117 aa). Residue Asp-64 is modified to 4-aspartylphosphate.

This is an uncharacterized protein from Leptospira interrogans serogroup Icterohaemorrhagiae serovar copenhageni (strain Fiocruz L1-130).